Here is a 401-residue protein sequence, read N- to C-terminus: Tyrosine--tRNA ligase (401 aa).

The 'HIGH' region signature appears at 43-52 (PTAPDLHLGH). A 'KMSKS' region motif is present at residues 227-231 (KMSKS). ATP is bound at residue Lys-230. The 62-residue stretch at 338-399 (MAIGNVLKEA…GKRRFAKINL (62 aa)) folds into the S4 RNA-binding domain.

Belongs to the class-I aminoacyl-tRNA synthetase family. TyrS type 2 subfamily. Homodimer.

It localises to the cytoplasm. The catalysed reaction is tRNA(Tyr) + L-tyrosine + ATP = L-tyrosyl-tRNA(Tyr) + AMP + diphosphate + H(+). Functionally, catalyzes the attachment of tyrosine to tRNA(Tyr) in a two-step reaction: tyrosine is first activated by ATP to form Tyr-AMP and then transferred to the acceptor end of tRNA(Tyr). The protein is Tyrosine--tRNA ligase of Idiomarina loihiensis (strain ATCC BAA-735 / DSM 15497 / L2-TR).